A 361-amino-acid chain; its full sequence is Phosphate acyltransferase (361 aa).

A disordered region spans residues 340–361; it reads VPADGAATEQGPTPRRIAPPRT.

It belongs to the PlsX family. Homodimer. Probably interacts with PlsY.

Its subcellular location is the cytoplasm. The enzyme catalyses a fatty acyl-[ACP] + phosphate = an acyl phosphate + holo-[ACP]. The protein operates within lipid metabolism; phospholipid metabolism. Catalyzes the reversible formation of acyl-phosphate (acyl-PO(4)) from acyl-[acyl-carrier-protein] (acyl-ACP). This enzyme utilizes acyl-ACP as fatty acyl donor, but not acyl-CoA. This is Phosphate acyltransferase from Anaeromyxobacter dehalogenans (strain 2CP-1 / ATCC BAA-258).